We begin with the raw amino-acid sequence, 388 residues long: Succinate--CoA ligase [ADP-forming] subunit beta (388 aa).

Positions 9-244 constitute an ATP-grasp domain; that stretch reads KQLFARYGLP…QSQEDPREAQ (236 aa). Residues Lys46, 53–55, Glu99, Thr102, and Glu107 each bind ATP; that span reads GRG. Residues Asn199 and Asp213 each coordinate Mg(2+). Substrate is bound by residues Asn264 and 321 to 323; that span reads GIV.

Belongs to the succinate/malate CoA ligase beta subunit family. As to quaternary structure, heterotetramer of two alpha and two beta subunits. It depends on Mg(2+) as a cofactor.

It carries out the reaction succinate + ATP + CoA = succinyl-CoA + ADP + phosphate. The enzyme catalyses GTP + succinate + CoA = succinyl-CoA + GDP + phosphate. Its pathway is carbohydrate metabolism; tricarboxylic acid cycle; succinate from succinyl-CoA (ligase route): step 1/1. Its function is as follows. Succinyl-CoA synthetase functions in the citric acid cycle (TCA), coupling the hydrolysis of succinyl-CoA to the synthesis of either ATP or GTP and thus represents the only step of substrate-level phosphorylation in the TCA. The beta subunit provides nucleotide specificity of the enzyme and binds the substrate succinate, while the binding sites for coenzyme A and phosphate are found in the alpha subunit. In Salmonella arizonae (strain ATCC BAA-731 / CDC346-86 / RSK2980), this protein is Succinate--CoA ligase [ADP-forming] subunit beta.